The primary structure comprises 289 residues: Nucleotide-binding protein COPRO5265_0725 (289 aa).

9 to 16 lines the ATP pocket; sequence GLSGAGKS. 59–62 is a GTP binding site; that stretch reads DSRS.

This sequence belongs to the RapZ-like family.

Functionally, displays ATPase and GTPase activities. This chain is Nucleotide-binding protein COPRO5265_0725, found in Coprothermobacter proteolyticus (strain ATCC 35245 / DSM 5265 / OCM 4 / BT).